The chain runs to 148 residues: uncharacterized protein (148 aa).

The next 2 helical transmembrane spans lie at 16-36 (IVGA…SIIL) and 41-61 (LSFS…AYIF).

This sequence to M.jannaschii MJ0696.

The protein resides in the cell membrane. This is an uncharacterized protein from Methanocaldococcus jannaschii (strain ATCC 43067 / DSM 2661 / JAL-1 / JCM 10045 / NBRC 100440) (Methanococcus jannaschii).